We begin with the raw amino-acid sequence, 459 residues long: FBD-associated F-box protein At4g13985 (459 aa).

In terms of domain architecture, F-box spans 18–64; the sequence is VDRLRNLPDCLLFKILLNLPTKDVVKLSVLSRRWRNVWRYVPGLDLE. Positions 375 to 429 constitute an FBD domain; that stretch reads KEGANILPGPRRFLTSLEYVKIAKPMAAEASEIKLKLVSYFLENSTILKKLTLCL.

The chain is FBD-associated F-box protein At4g13985 from Arabidopsis thaliana (Mouse-ear cress).